The sequence spans 436 residues: Elongation factor 1-gamma-A (436 aa).

The GST N-terminal domain maps to A2–T87. Residues T88–F221 form the GST C-terminal domain. Composition is skewed to basic and acidic residues over residues F221–K249 and S265–P278. Positions F221–P278 are disordered. In terms of domain architecture, EF-1-gamma C-terminal spans S275 to K436.

In terms of assembly, EF-1 is composed of four subunits: alpha, beta, delta, and gamma. Post-translationally, phosphorylated by CDK1. The N-terminus is blocked.

Functionally, probably plays a role in anchoring the complex to other cellular components. This Xenopus laevis (African clawed frog) protein is Elongation factor 1-gamma-A (eef1g-a).